The chain runs to 176 residues: Large ribosomal subunit protein uL6 (176 aa).

The protein belongs to the universal ribosomal protein uL6 family. Part of the 50S ribosomal subunit.

This protein binds to the 23S rRNA, and is important in its secondary structure. It is located near the subunit interface in the base of the L7/L12 stalk, and near the tRNA binding site of the peptidyltransferase center. The polypeptide is Large ribosomal subunit protein uL6 (Burkholderia ambifaria (strain ATCC BAA-244 / DSM 16087 / CCUG 44356 / LMG 19182 / AMMD) (Burkholderia cepacia (strain AMMD))).